The chain runs to 111 residues: Large ribosomal subunit protein uL24 (111 aa).

The protein belongs to the universal ribosomal protein uL24 family. As to quaternary structure, part of the 50S ribosomal subunit.

One of two assembly initiator proteins, it binds directly to the 5'-end of the 23S rRNA, where it nucleates assembly of the 50S subunit. Its function is as follows. One of the proteins that surrounds the polypeptide exit tunnel on the outside of the subunit. In Heliobacterium modesticaldum (strain ATCC 51547 / Ice1), this protein is Large ribosomal subunit protein uL24.